A 705-amino-acid chain; its full sequence is Beta-xylosidase (705 aa).

This sequence belongs to the glycosyl hydrolase 52 family.

The catalysed reaction is Hydrolysis of (1-&gt;4)-beta-D-xylans, to remove successive D-xylose residues from the non-reducing termini.. It functions in the pathway glycan degradation; xylan degradation. This Geobacillus stearothermophilus (Bacillus stearothermophilus) protein is Beta-xylosidase (xylA).